The chain runs to 339 residues: Tetraacyldisaccharide 4'-kinase (339 aa).

Residue 62-69 (VAGGTGKT) participates in ATP binding.

It belongs to the LpxK family.

It carries out the reaction a lipid A disaccharide + ATP = a lipid IVA + ADP + H(+). The protein operates within glycolipid biosynthesis; lipid IV(A) biosynthesis; lipid IV(A) from (3R)-3-hydroxytetradecanoyl-[acyl-carrier-protein] and UDP-N-acetyl-alpha-D-glucosamine: step 6/6. Functionally, transfers the gamma-phosphate of ATP to the 4'-position of a tetraacyldisaccharide 1-phosphate intermediate (termed DS-1-P) to form tetraacyldisaccharide 1,4'-bis-phosphate (lipid IVA). In Xylella fastidiosa (strain M23), this protein is Tetraacyldisaccharide 4'-kinase.